The primary structure comprises 431 residues: Glucose-1-phosphate adenylyltransferase (431 aa).

Alpha-D-glucose 1-phosphate contacts are provided by residues Tyr-109, Gly-175, 190–191, and Ser-208; that span reads EK.

It belongs to the bacterial/plant glucose-1-phosphate adenylyltransferase family. Homotetramer.

It carries out the reaction alpha-D-glucose 1-phosphate + ATP + H(+) = ADP-alpha-D-glucose + diphosphate. It functions in the pathway glycan biosynthesis; glycogen biosynthesis. Its function is as follows. Involved in the biosynthesis of ADP-glucose, a building block required for the elongation reactions to produce glycogen. Catalyzes the reaction between ATP and alpha-D-glucose 1-phosphate (G1P) to produce pyrophosphate and ADP-Glc. In Alteromonas mediterranea (strain DSM 17117 / CIP 110805 / LMG 28347 / Deep ecotype), this protein is Glucose-1-phosphate adenylyltransferase.